The following is a 520-amino-acid chain: MGPQRRLSPAGAALLWGFLLQLTAAQEAILHASGNGTTKDYCMLYNPYWTALPSTLENATSISLMNLTSTPLCNLSDIPPVGIKSKAVVVPWGSCHFLEKARIAQKGGAEAMLVVNNSVLFPPSGNRSEFPDVKILIAFISYKDFRDMNQTLGDNITVKMYSPSWPNFDYTMVVIFVIAVFTVALGGYWSGLVELENLKAVTTEDREMRKKKEEYLTFSPLTVVIFVVICCVMMVLLYFFYKWLVYVMIAIFCIASAMSLYNCLAALIHKIPYGQCTIACRGKNMEVRLIFLSGLCIAVAVVWAVFRNEDRWAWILQDILGIAFCLNLIKTLKLPNFKSCVILLGLLLLYDVFFVFITPFITKNGESIMVELAAGPFGNNEKLPVVIRVPKLIYFSVMSVCLMPVSILGFGDIIVPGLLIAYCRRFDVQTGSSYIYYVSSTVAYAIGMILTFVVLVLMKKGQPALLYLVPCTLITASVVAWRRKEMKKFWKGNSYQMMDHLDCATNEENPVISGEQIVQQ.

The first 25 residues, 1–25 (MGPQRRLSPAGAALLWGFLLQLTAA), serve as a signal peptide directing secretion. Over 26-172 (QEAILHASGN…PSWPNFDYTM (147 aa)) the chain is Lumenal. Asn-58, Asn-66, Asn-74, Asn-116, Asn-126, and Asn-149 each carry an N-linked (GlcNAc...) asparagine glycan. Residues 63-151 (SLMNLTSTPL…YKDFRDMNQT (89 aa)) form the PA domain. The N-linked (GlcNAc...) (complex) asparagine glycan is linked to Asn-155. Residues 173–193 (VVIFVIAVFTVALGGYWSGLV) form a helical membrane-spanning segment. The Cytoplasmic portion of the chain corresponds to 194-220 (ELENLKAVTTEDREMRKKKEEYLTFSP). Residues 221 to 241 (LTVVIFVVICCVMMVLLYFFY) traverse the membrane as a helical segment. Residues 242-247 (KWLVYV) lie on the Lumenal side of the membrane. The chain crosses the membrane as a helical span at residues 248–268 (MIAIFCIASAMSLYNCLAALI). Over 269 to 285 (HKIPYGQCTIACRGKNM) the chain is Cytoplasmic. A helical transmembrane segment spans residues 286–306 (EVRLIFLSGLCIAVAVVWAVF). Over 307–311 (RNEDR) the chain is Lumenal. A helical transmembrane segment spans residues 312 to 332 (WAWILQDILGIAFCLNLIKTL). The Cytoplasmic segment spans residues 333 to 340 (KLPNFKSC). The chain crosses the membrane as a helical span at residues 341-361 (VILLGLLLLYDVFFVFITPFI). Asp-351 is a catalytic residue. The Lumenal segment spans residues 362 to 399 (TKNGESIMVELAAGPFGNNEKLPVVIRVPKLIYFSVMS). Residues 400–420 (VCLMPVSILGFGDIIVPGLLI) form a helical membrane-spanning segment. Asp-412 is a catalytic residue. Residues 421 to 437 (AYCRRFDVQTGSSYIYY) lie on the Cytoplasmic side of the membrane. The chain crosses the membrane as a helical span at residues 438-458 (VSSTVAYAIGMILTFVVLVLM). Over 459–460 (KK) the chain is Lumenal. A helical membrane pass occupies residues 461–481 (GQPALLYLVPCTLITASVVAW). Residues 463–465 (PAL) carry the PAL motif. Residues 482–520 (RRKEMKKFWKGNSYQMMDHLDCATNEENPVISGEQIVQQ) are Cytoplasmic-facing. Residues 495 to 498 (YQMM) carry the YXXo lysosomal targeting motif motif.

The protein belongs to the peptidase A22B family. Interacts with ITM2B. In terms of processing, glycosylated. As to expression, ubiquitous.

Its subcellular location is the late endosome membrane. The protein resides in the lysosome membrane. It is found in the membrane. Its function is as follows. Intramembrane-cleaving aspartic protease (I-CLiP) that cleaves type II membrane signal peptides in the hydrophobic plane of the membrane. Functions in FASLG, ITM2B and TNF processing. Catalyzes the intramembrane cleavage of the anchored fragment of shed TNF-alpha (TNF), which promotes the release of the intracellular domain (ICD) for signaling to the nucleus. Also responsible for the intramembrane cleavage of Fas antigen ligand FASLG, which promotes the release of the intracellular FasL domain (FasL ICD). Essential for degradation of the invariant chain CD74 that plays a central role in the function of antigen-presenting cells in the immune system. Plays a role in the regulation of innate and adaptive immunity. Catalyzes the intramembrane cleavage of the simian foamy virus envelope glycoprotein gp130 independently of prior ectodomain shedding by furin or furin-like proprotein convertase (PC)-mediated cleavage proteolysis. In Homo sapiens (Human), this protein is Signal peptide peptidase-like 2A.